A 441-amino-acid polypeptide reads, in one-letter code: Chitinase-like protein Idgf3 (441 aa).

Residues Met-1 to Ala-23 form the signal peptide. A GH18 domain is found at Pro-25–Leu-441. Cys-29 and Cys-56 are disulfide-bonded. An N-linked (GlcNAc...) asparagine glycan is attached at Asn-221. Residues Ser-309–Lys-331 are disordered. Cys-342 and Cys-425 are disulfide-bonded.

Belongs to the glycosyl hydrolase 18 family. IDGF subfamily. In terms of processing, glycosylated.

The protein resides in the secreted. In terms of biological role, cooperates with insulin-like peptides to stimulate the proliferation, polarization and motility of imaginal disk cells. May act by stabilizing the binding of insulin-like peptides to its receptor through a simultaneous interaction with both molecules to form a multiprotein signaling complex. In Drosophila yakuba (Fruit fly), this protein is Chitinase-like protein Idgf3 (Idgf3).